Consider the following 474-residue polypeptide: PRAME family member 1 (474 aa).

An LRR 1; degenerate repeat occupies 97 to 124; that stretch reads RWKLQVLDLRDVDENFWARWPGAWALSC. The stretch at 179–203 is one LRR 2; degenerate repeat; it reads HLCCSKLVNYLTPIKYLRKSLKIIY. The stretch at 204 to 230 is one LRR 3; degenerate repeat; that stretch reads LNSIQELEIRNMSWPRLIRKLRCYLKE. Residues 231–265 form an LRR 4; degenerate repeat; sequence MKNLRKLVFSRCHHYTSDNELEGRLVAKFSSVFLR. 5 LRR repeats span residues 266–291, 292–323, 324–342, 348–375, and 376–400; these read LEHL…IRCL, QNPL…GYLK, HLNL…PLGA, AASL…GLSR, and CSQL…LLRH.

The protein belongs to the PRAME family.

The polypeptide is PRAME family member 1 (Homo sapiens (Human)).